The sequence spans 479 residues: Replication factor C large subunit (479 aa).

50 to 57 (GPPGSGKT) contributes to the ATP binding site. A compositionally biased stretch (basic and acidic residues) spans 420–468 (EKIRKERKEEEKVEVREEKPEEKVEEKREERETKKEKEKKEEKKAEKKG). The interval 420 to 479 (EKIRKERKEEEKVEVREEKPEEKVEEKREERETKKEKEKKEEKKAEKKGKQVTLFDFIKK) is disordered.

It belongs to the activator 1 small subunits family. RfcL subfamily. As to quaternary structure, heterohexamer composed of four small subunits (RfcS) and two large subunits (RfcL).

Its function is as follows. Part of the RFC clamp loader complex which loads the PCNA sliding clamp onto DNA. The complex possesses DNA-independent ATPase activity. In Pyrococcus abyssi (strain GE5 / Orsay), this protein is Replication factor C large subunit (rfcL).